A 406-amino-acid polypeptide reads, in one-letter code: UPF0754 membrane protein Cyan7425_4067 (406 aa).

Residues 381-401 (IVTLGGVLGLLIGIAQSVLLL) form a helical membrane-spanning segment.

It belongs to the UPF0754 family.

It localises to the cell inner membrane. The protein is UPF0754 membrane protein Cyan7425_4067 of Cyanothece sp. (strain PCC 7425 / ATCC 29141).